The chain runs to 275 residues: Large ribosomal subunit protein uL2 (275 aa).

A compositionally biased stretch (polar residues) spans 38–53; it reads SSKAGRNNNGRITTRH. Disordered stretches follow at residues 38-60 and 224-257; these read SSKA…GHKQ and AMNP…KGFR.

The protein belongs to the universal ribosomal protein uL2 family. Part of the 50S ribosomal subunit. Forms a bridge to the 30S subunit in the 70S ribosome.

Functionally, one of the primary rRNA binding proteins. Required for association of the 30S and 50S subunits to form the 70S ribosome, for tRNA binding and peptide bond formation. It has been suggested to have peptidyltransferase activity; this is somewhat controversial. Makes several contacts with the 16S rRNA in the 70S ribosome. This is Large ribosomal subunit protein uL2 from Burkholderia pseudomallei (strain 1106a).